Here is a 661-residue protein sequence, read N- to C-terminus: Fusaric acid cluster transcription factor FUB12 (661 aa).

The zn(2)-C6 fungal-type DNA-binding region spans 17-48; that stretch reads CVPCRTRKIKCNAAVVGLPCGSCVSRECPDDC. 2 disordered regions span residues 57–131 and 151–184; these read TVKV…RPPG and SAAQ…PQLD. Over residues 73–98 the composition is skewed to polar residues; it reads PDTNGSVLSPRQQQLPTNVSRQTTDS. Basic and acidic residues predominate over residues 99-109; sequence SHSDPVEESIH. Over residues 110 to 119 the composition is skewed to polar residues; the sequence is ASHTGSSLRN. Residues 120–129 show a composition bias toward basic and acidic residues; the sequence is DTPHSRDRRP.

The protein localises to the nucleus. In terms of biological role, efflux pump involved in export of biosynthesis of fusaric acid, a mycotoxin with low to moderate toxicity to animals and humans, but with high phytotoxic properties. Constitutes a self-protecting mechanism of the fungus against critical levels of FSA within the cell. This Fusarium oxysporum f. sp. lycopersici (strain 4287 / CBS 123668 / FGSC 9935 / NRRL 34936) (Fusarium vascular wilt of tomato) protein is Fusaric acid cluster transcription factor FUB12.